The chain runs to 318 residues: Protoheme IX farnesyltransferase (318 aa).

9 consecutive transmembrane segments (helical) span residues Ile29–Val49, Pro51–Ile71, Leu102–Leu122, Leu123–Leu143, Ile151–Gly171, Leu179–Ile199, Ala219–Val239, Pro241–Ile261, and Leu280–Leu300.

This sequence belongs to the UbiA prenyltransferase family. Protoheme IX farnesyltransferase subfamily.

Its subcellular location is the cell inner membrane. It carries out the reaction heme b + (2E,6E)-farnesyl diphosphate + H2O = Fe(II)-heme o + diphosphate. It functions in the pathway porphyrin-containing compound metabolism; heme O biosynthesis; heme O from protoheme: step 1/1. In terms of biological role, converts heme B (protoheme IX) to heme O by substitution of the vinyl group on carbon 2 of heme B porphyrin ring with a hydroxyethyl farnesyl side group. The sequence is that of Protoheme IX farnesyltransferase from Nostoc sp. (strain PCC 7120 / SAG 25.82 / UTEX 2576).